Consider the following 499-residue polypeptide: Maturase K (499 aa).

It belongs to the intron maturase 2 family. MatK subfamily.

The protein resides in the plastid. It localises to the chloroplast. Its function is as follows. Usually encoded in the trnK tRNA gene intron. Probably assists in splicing its own and other chloroplast group II introns. The polypeptide is Maturase K (Macrozamia communis (Burrawang palm)).